Reading from the N-terminus, the 184-residue chain is MQHEDKTPEQQENKTPETELQQENAPATPQEAGAAGSIDDRIAELEAKLAEQQAAVLYAKAEGENIRRRAAEDIEKARKFALEKFSSELLAVKDSLDAALNVGSATLESYRDGVELTAKQLTAVFEKFSIVEINPVGEKFDPNKHQAIGTVESEAESNTVVNVLQKGYTLNDRVLRPALVMVAK.

Residues 1-17 (MQHEDKTPEQQENKTPE) are compositionally biased toward basic and acidic residues. Residues 1 to 39 (MQHEDKTPEQQENKTPETELQQENAPATPQEAGAAGSID) are disordered. Residues 18–27 (TELQQENAPA) are compositionally biased toward polar residues.

This sequence belongs to the GrpE family. In terms of assembly, homodimer.

It localises to the cytoplasm. Participates actively in the response to hyperosmotic and heat shock by preventing the aggregation of stress-denatured proteins, in association with DnaK and GrpE. It is the nucleotide exchange factor for DnaK and may function as a thermosensor. Unfolded proteins bind initially to DnaJ; upon interaction with the DnaJ-bound protein, DnaK hydrolyzes its bound ATP, resulting in the formation of a stable complex. GrpE releases ADP from DnaK; ATP binding to DnaK triggers the release of the substrate protein, thus completing the reaction cycle. Several rounds of ATP-dependent interactions between DnaJ, DnaK and GrpE are required for fully efficient folding. The chain is Protein GrpE from Methylobacillus flagellatus (strain ATCC 51484 / DSM 6875 / VKM B-1610 / KT).